The following is a 221-amino-acid chain: Potassium voltage-gated channel subfamily E member 4 (221 aa).

The Extracellular portion of the chain corresponds to 1–86 (MHFLTIYPNC…AGGGSGNGNE (86 aa)). A glycan (N-linked (GlcNAc...) asparagine) is linked at Asn9. The segment covering 58 to 72 (LNSTHPGTAASSSPL) has biased composition (polar residues). Positions 58–77 (LNSTHPGTAASSSPLESRAA) are disordered. Residues 87–107 (YFYILVVMSFYGIFLIGIMLG) form a helical membrane-spanning segment. Residues 108–221 (YMKSKRREKK…GSSENIHQNS (114 aa)) lie on the Cytoplasmic side of the membrane. The interval 175-221 (SVSSESSSPDVHLTIQEEGADDELEETSETPLNESSEGSSENIHQNS) is disordered. The segment covering 192–202 (EGADDELEETS) has biased composition (acidic residues). Over residues 203-221 (ETPLNESSEGSSENIHQNS) the composition is skewed to polar residues.

It belongs to the potassium channel KCNE family. As to quaternary structure, forms heterooligomers with KCNA3, inhibiting its activity by impairing localization to the cell membrane. The stoichiometry of KCNA3 and KCNE4 in the heterooligomers are 4:1, 4:2, 4:3 or 4:4 respectively. Increasing the number of KCNE4 subunits steadily slows the activation KCNA3 and decreases its abundance at the cell membrane. However, a single subunit of KCNE4 is sufficient for the cooperative enhancement of the inactivating function of the channel. However, a single subunit of KCNE4 is sufficient for the cooperative enhancement of the inactivating function of the channel. Interacts with KCNQ1; impairs KCNQ1 localization in lipid rafts and inhibits voltage-gated potassium channel activity. As to expression, predominantly expressed in embryo and adult uterus. Low expression found in kidney, small intestine, lung and heart. In terms of tissue distribution, detected in kidney, thymus, and uterus (at protein level).

The protein localises to the membrane. In terms of biological role, ancillary protein that functions as a regulatory subunit of the voltage-gated potassium (Kv) channel complex composed of pore-forming and potassium-conducting alpha subunits and of regulatory beta subunits. KCNE4 beta subunit modulates the gating kinetics and enhances stability of the channel complex. Associates with KCNQ1/KVLTQ1 alpha subunit to inhibit potassium currents. Its function is as follows. May inhibit KCNQ4-mediated potassium currents. The sequence is that of Potassium voltage-gated channel subfamily E member 4 from Homo sapiens (Human).